The sequence spans 122 residues: Large ribosomal subunit protein bL12 (122 aa).

This sequence belongs to the bacterial ribosomal protein bL12 family. Homodimer. Part of the ribosomal stalk of the 50S ribosomal subunit. Forms a multimeric L10(L12)X complex, where L10 forms an elongated spine to which 2 to 4 L12 dimers bind in a sequential fashion. Binds GTP-bound translation factors.

Forms part of the ribosomal stalk which helps the ribosome interact with GTP-bound translation factors. Is thus essential for accurate translation. This Levilactobacillus brevis (strain ATCC 367 / BCRC 12310 / CIP 105137 / JCM 1170 / LMG 11437 / NCIMB 947 / NCTC 947) (Lactobacillus brevis) protein is Large ribosomal subunit protein bL12.